A 186-amino-acid polypeptide reads, in one-letter code: Centromere protein M (186 aa).

The protein localises to the nucleus. Its subcellular location is the chromosome. The protein resides in the centromere. Functionally, probable component of a centromeric complex involved in assembly of kinetochore proteins, mitotic progression and chromosome segregation. The protein is Centromere protein M (cenpm) of Danio rerio (Zebrafish).